Reading from the N-terminus, the 536-residue chain is Glutamate--tRNA ligase, mitochondrial (536 aa).

Residue 48–50 coordinates L-glutamate; sequence RFA. The 'HIGH' region motif lies at 53–61; that stretch reads PTGFLHLGS. Residue H58 coordinates ATP. L-glutamate is bound by residues E84, 235 to 239, and R253; that span reads YHLAN. Residues E256 and 291–295 contribute to the ATP site; that span reads KLSKR. Residues 291–295 carry the 'KMSKS' region motif; sequence KLSKR.

It belongs to the class-I aminoacyl-tRNA synthetase family. Glutamate--tRNA ligase type 1 subfamily.

Its subcellular location is the mitochondrion matrix. It carries out the reaction tRNA(Glu) + L-glutamate + ATP = L-glutamyl-tRNA(Glu) + AMP + diphosphate. Its function is as follows. Catalyzes the attachment of glutamate to tRNA(Glu) in a two-step reaction: glutamate is first activated by ATP to form Glu-AMP and then transferred to the acceptor end of tRNA(Glu). The sequence is that of Glutamate--tRNA ligase, mitochondrial (MSE1) from Saccharomyces cerevisiae (strain ATCC 204508 / S288c) (Baker's yeast).